A 40-amino-acid chain; its full sequence is uncharacterized protein (40 aa).

The signal sequence occupies residues Met1–Ala17.

This is an uncharacterized protein from Archaeoglobus fulgidus (strain ATCC 49558 / DSM 4304 / JCM 9628 / NBRC 100126 / VC-16).